A 419-amino-acid polypeptide reads, in one-letter code: UDP-N-acetylglucosamine 1-carboxyvinyltransferase (419 aa).

Position 22–23 (22–23) interacts with phosphoenolpyruvate; sequence KN. A UDP-N-acetyl-alpha-D-glucosamine-binding site is contributed by Arg-95. Cys-119 acts as the Proton donor in catalysis. Cys-119 carries the post-translational modification 2-(S-cysteinyl)pyruvic acid O-phosphothioketal. Residues 164 to 167, Asp-308, and Ile-330 each bind UDP-N-acetyl-alpha-D-glucosamine; that span reads KVSV.

This sequence belongs to the EPSP synthase family. MurA subfamily.

It is found in the cytoplasm. It catalyses the reaction phosphoenolpyruvate + UDP-N-acetyl-alpha-D-glucosamine = UDP-N-acetyl-3-O-(1-carboxyvinyl)-alpha-D-glucosamine + phosphate. It participates in cell wall biogenesis; peptidoglycan biosynthesis. Cell wall formation. Adds enolpyruvyl to UDP-N-acetylglucosamine. In Rickettsia canadensis (strain McKiel), this protein is UDP-N-acetylglucosamine 1-carboxyvinyltransferase.